A 330-amino-acid polypeptide reads, in one-letter code: Putative quinone oxidoreductase YhfP (330 aa).

NADP(+)-binding positions include Y45, 160-163, 182-184, R202, L248, I262, S273, and N320; these read TGGV and TGN.

It belongs to the zinc-containing alcohol dehydrogenase family. Quinone oxidoreductase subfamily. Homodimer, or homotetramer.

The protein resides in the cytoplasm. This Bacillus subtilis (strain 168) protein is Putative quinone oxidoreductase YhfP (yhfP).